The following is a 123-amino-acid chain: Large ribosomal subunit protein uL18 (123 aa).

It belongs to the universal ribosomal protein uL18 family. Part of the 50S ribosomal subunit; part of the 5S rRNA/L5/L18/L25 subcomplex. Contacts the 5S and 23S rRNAs.

Functionally, this is one of the proteins that bind and probably mediate the attachment of the 5S RNA into the large ribosomal subunit, where it forms part of the central protuberance. The sequence is that of Large ribosomal subunit protein uL18 from Chlamydia trachomatis serovar A (strain ATCC VR-571B / DSM 19440 / HAR-13).